The primary structure comprises 783 residues: Probable phosphoketolase (783 aa).

The protein belongs to the XFP family. Requires thiamine diphosphate as cofactor.

In Rhodopseudomonas palustris (strain ATCC BAA-98 / CGA009), this protein is Probable phosphoketolase.